A 445-amino-acid chain; its full sequence is von Willebrand factor A domain-containing protein 1 (445 aa).

The N-terminal stretch at 1–22 (MLPWTALGLALSLRLALARSGA) is a signal peptide. The VWFA domain occupies 34–213 (DLMFLLDSSA…ELRGSILDAM (180 aa)). Ser74 and Ser80 each carry phosphoserine; by FAM20C. Position 83 is a phosphotyrosine (Tyr83). Ser93 bears the Phosphoserine; by FAM20C mark. Residues 214–304 (RPQQLHATEI…QILRVRTRPG (91 aa)) enclose the Fibronectin type-III 1 domain. Residue Asn264 is glycosylated (N-linked (GlcNAc...) asparagine). Disordered stretches follow at residues 302-325 (RPGE…TQLA) and 411-445 (RESA…SREP). Low complexity predominate over residues 311-325 (SGPESGAGPAPTQLA). Residues 334–427 (GPERIVISHA…KACTPDGPRP (94 aa)) enclose the Fibronectin type-III 2 domain.

In terms of assembly, homodimer or homomultimer; disulfide-linked. Interacts with HSPG2. In terms of processing, N-glycosylated.

The protein localises to the secreted. The protein resides in the extracellular space. Its subcellular location is the extracellular matrix. It is found in the basement membrane. Its function is as follows. Promotes matrix assembly. Involved in the organization of skeletal muscles and in the formation of neuromuscular junctions. This Homo sapiens (Human) protein is von Willebrand factor A domain-containing protein 1.